A 433-amino-acid polypeptide reads, in one-letter code: Serine hydroxymethyltransferase (433 aa).

Residues leucine 131 and 135-137 (GHL) each bind (6S)-5,6,7,8-tetrahydrofolate. Lysine 240 carries the N6-(pyridoxal phosphate)lysine modification.

This sequence belongs to the SHMT family. Homodimer. It depends on pyridoxal 5'-phosphate as a cofactor.

The protein localises to the cytoplasm. The catalysed reaction is (6R)-5,10-methylene-5,6,7,8-tetrahydrofolate + glycine + H2O = (6S)-5,6,7,8-tetrahydrofolate + L-serine. It participates in one-carbon metabolism; tetrahydrofolate interconversion. Its pathway is amino-acid biosynthesis; glycine biosynthesis; glycine from L-serine: step 1/1. Its function is as follows. Catalyzes the reversible interconversion of serine and glycine with tetrahydrofolate (THF) serving as the one-carbon carrier. This reaction serves as the major source of one-carbon groups required for the biosynthesis of purines, thymidylate, methionine, and other important biomolecules. Also exhibits THF-independent aldolase activity toward beta-hydroxyamino acids, producing glycine and aldehydes, via a retro-aldol mechanism. This chain is Serine hydroxymethyltransferase, found in Bifidobacterium adolescentis (strain ATCC 15703 / DSM 20083 / NCTC 11814 / E194a).